We begin with the raw amino-acid sequence, 496 residues long: Fibronectin type III and SPRY domain-containing protein 1 (496 aa).

Residues 4 to 99 (QREALRKIIT…ALESSEELLE (96 aa)) adopt a coiled-coil conformation. The region spanning 105–162 (LQASDSEDFSQAAKEIKDGITMAPAFRLSLKAKVSDNMSHLMVDFAQERQMLQALKFL) is the COS domain. A Fibronectin type-III domain is found at 164 to 268 (VPSAPTIDLA…EPVTLETPAF (105 aa)). The B30.2/SPRY domain occupies 290 to 477 (WDAMGGKVQD…VTTGLQVPSA (188 aa)). Residues 301-336 (KAREKEGKGRTASPVNSPARGTPSPKRMSSGRGGRD) are disordered. Arg310 and Arg320 each carry omega-N-methylarginine.

In terms of assembly, oligomerization is required for binding to microtubules.

Its subcellular location is the cytoplasm. The protein localises to the cytoskeleton. It is found in the microtubule organizing center. It localises to the centrosome. The protein resides in the nucleus. Its subcellular location is the cleavage furrow. Functionally, may be involved in microtubule organization and stabilization. This chain is Fibronectin type III and SPRY domain-containing protein 1 (Fsd1), found in Mus musculus (Mouse).